The following is a 708-amino-acid chain: E3 ubiquitin-protein ligase Praja-2 (708 aa).

The span at Met1 to Ala10 shows a compositional bias: basic and acidic residues. Disordered regions lie at residues Met1 to Thr30 and Glu53 to Pro90. The residue at position 2 (Ser2) is an N-acetylserine. The span at Glu74 to Pro90 shows a compositional bias: polar residues. Phosphoserine is present on Ser196. Disordered stretches follow at residues Gly244 to Ser342, Thr385 to Phe411, and Asp425 to Leu495. Thr246 bears the Phosphothreonine mark. The segment covering Val249–Glu276 has biased composition (polar residues). Ser253, Ser309, and Ser323 each carry phosphoserine. A compositionally biased stretch (polar residues) spans Ile322–Gly332. Residues Phe333–Ser342 are compositionally biased toward basic and acidic residues. The residue at position 342 (Ser342) is a Phosphoserine; by PKA. Thr389 carries the phosphothreonine; by PKA modification. At Ser432 the chain carries Phosphoserine. A compositionally biased stretch (acidic residues) spans Asn467–Gln483. The span at Glu484–Thr493 shows a compositional bias: polar residues. Residues Asp531–Pro708 are interaction with PRKAR1A, PRKAR2A and PRKAR2B. A mediates interaction with TBC1D31 region spans residues Trp550–Asp570. Residues Cys634–Arg675 form an RING-type; atypical zinc finger. A disordered region spans residues Ala685–Pro708. The span at Pro699 to Pro708 shows a compositional bias: low complexity.

Binds ubiquitin-conjugating enzymes (E2s). In vitro, interacts with the ubiquitin-conjugating enzyme, UBE2D2. The phosphorylated form interacts with PRKAR1A, PRKAR2A and PRKAR2B. Binds the catalytic subunits of cAMP-dependent protein kinase. Interacts with MFHAS1. Interacts with TBC1D31; the interaction is direct and recruits PJA2 to centrosomes.

Its subcellular location is the cytoplasm. It is found in the cell membrane. The protein resides in the endoplasmic reticulum membrane. The protein localises to the golgi apparatus membrane. It localises to the synapse. Its subcellular location is the postsynaptic density. It is found in the cytoskeleton. The protein resides in the microtubule organizing center. The protein localises to the centrosome. It carries out the reaction S-ubiquitinyl-[E2 ubiquitin-conjugating enzyme]-L-cysteine + [acceptor protein]-L-lysine = [E2 ubiquitin-conjugating enzyme]-L-cysteine + N(6)-ubiquitinyl-[acceptor protein]-L-lysine.. Its pathway is protein modification; protein ubiquitination. Its function is as follows. Has E2-dependent E3 ubiquitin-protein ligase activity. Responsible for ubiquitination of cAMP-dependent protein kinase type I and type II-alpha/beta regulatory subunits and for targeting them for proteasomal degradation. Essential for PKA-mediated long-term memory processes. Through the ubiquitination of MFHAS1, positively regulates the TLR2 signaling pathway that leads to the activation of the downstream p38 and JNK MAP kinases and promotes the polarization of macrophages toward the pro-inflammatory M1 phenotype. Plays a role in ciliogenesis by ubiquitinating OFD1. The protein is E3 ubiquitin-protein ligase Praja-2 (PJA2) of Pongo abelii (Sumatran orangutan).